Consider the following 424-residue polypeptide: Glutamate-1-semialdehyde 2,1-aminomutase (424 aa).

K263 is modified (N6-(pyridoxal phosphate)lysine).

The protein belongs to the class-III pyridoxal-phosphate-dependent aminotransferase family. HemL subfamily. In terms of assembly, homodimer. It depends on pyridoxal 5'-phosphate as a cofactor.

The protein resides in the cytoplasm. The enzyme catalyses (S)-4-amino-5-oxopentanoate = 5-aminolevulinate. It participates in porphyrin-containing compound metabolism; protoporphyrin-IX biosynthesis; 5-aminolevulinate from L-glutamyl-tRNA(Glu): step 2/2. The chain is Glutamate-1-semialdehyde 2,1-aminomutase from Campylobacter jejuni subsp. doylei (strain ATCC BAA-1458 / RM4099 / 269.97).